The primary structure comprises 235 residues: Sugar fermentation stimulation protein homolog (235 aa).

The protein belongs to the SfsA family.

The chain is Sugar fermentation stimulation protein homolog from Pseudomonas aeruginosa (strain ATCC 15692 / DSM 22644 / CIP 104116 / JCM 14847 / LMG 12228 / 1C / PRS 101 / PAO1).